The primary structure comprises 1061 residues: Ribonuclease E (1061 aa).

One can recognise an S1 motif domain in the interval 39 to 119 (ANIYKGKITR…GNKGAALTTF (81 aa)). An interaction with RNA region spans residues 57-112 (FVDYGAERHGFLPLKEIAREYFPANYSAHGRPNIKDVLREGQEVIVQIDKEERGNK). Residues 169-170 (RT) form an interaction with RNA 5'-terminal monophosphate region. Mg(2+) is bound by residues Asp303 and Asp346. Residues Cys404 and Cys407 each coordinate Zn(2+). The segment at 404 to 407 (CPRC) is required for zinc-mediated homotetramerization and catalytic activity. Disordered stretches follow at residues 532-565 (FAMP…PAAP), 586-731 (EETK…KVRY), and 752-822 (EPIV…RYPT). Over residues 536–546 (DVPPAPTPAEP) the composition is skewed to pro residues. A compositionally biased stretch (low complexity) spans 547 to 565 (AAPVVAPAPKAAPATPAAP). Basic and acidic residues-rich tracts occupy residues 598–608 (AEAKPERQQDR), 615–640 (NRRD…EENR), and 652–690 (ETRE…KRQA). The segment covering 796-814 (RRSRRSPRHLRVSGQRRRR) has biased composition (basic residues). An interaction with enolase region spans residues 833-850 (ASPELASGKVWIRYPIVR). Positions 1021–1061 (EAPRHSDWQRPTFAFEGKGAAGGHTATHHASAAPARPQPVE) are interaction with PNPase. Residues 1031–1061 (PTFAFEGKGAAGGHTATHHASAAPARPQPVE) are disordered. Positions 1043–1055 (GHTATHHASAAPA) are enriched in low complexity.

It belongs to the RNase E/G family. RNase E subfamily. Component of the RNA degradosome, which is a multiprotein complex involved in RNA processing and mRNA degradation. Within the RNA degradosome, RNase E assembles into a homotetramer formed by a dimer of dimers. Tetramerization is essential for catalytic activity, but not for RNA-binding. Interacts with RhlB, PNPase (pnp) and enolase (eno). Interacts with DeaD at reduced temperature. Zn(2+) serves as cofactor. Mg(2+) is required as a cofactor.

It localises to the cytoplasm. Its subcellular location is the cell inner membrane. The catalysed reaction is Endonucleolytic cleavage of single-stranded RNA in A- and U-rich regions.. With respect to regulation, the presence of a 5'-monophosphate on substrate RNA accelerates its cleavage by catalytically activating the enzyme. Binding to the membrane stabilizes protein structure and increases affinity for the substrate. Its function is as follows. Endoribonuclease that plays a central role in RNA processing and decay. Required for the maturation of 5S and 16S rRNAs and the majority of tRNAs. Also involved in the degradation of most mRNAs. Can also process other RNA species, such as RNAI, a molecule that controls the replication of ColE1 plasmid, and the cell division inhibitor DicF-RNA. It initiates the decay of RNAs by cutting them internally near their 5'-end. It is able to remove poly(A) tails by an endonucleolytic process. Required to initiate rRNA degradation during both starvation and quality control; acts after RNase PH (rph) exonucleolytically digests the 3'-end of the 16S rRNA. Degradation of 16S rRNA leads to 23S rRNA degradation. Processes the 3 tRNA(Pro) precursors immediately after the 3'-CCA to generate the mature ends. Functionally, prefers 5'-monophosphorylated substrates over 5'-triphosphorylated substrates. 5'-monophosphate-assisted cleavage requires at least 2 and preferably 3 or more unpaired 5'-terminal nucleotides. The optimal spacing between the 5' end and the scissile phosphate appears to be 8 nucleotides. Any sequence of unpaired nucleotides at the 5'-end is tolerated. The chain is Ribonuclease E from Escherichia coli (strain K12).